A 95-amino-acid chain; its full sequence is Ribosome-binding factor A (95 aa).

It belongs to the RbfA family. In terms of assembly, interacts with the 30S ribosomal subunit as a monomer, binding in a position overlapping the sites of the A and P site tRNAs, and displacing segments of the 16S rRNA. Probably contacts 16S rRNA and ribosomal protein S9 and S13.

It localises to the cytoplasm. In terms of biological role, one of several proteins that assist in the late maturation steps of the functional core of the 30S ribosomal subunit. Associates with free 30S ribosomal subunits (but not with 30S subunits that are part of 70S ribosomes or polysomes). Required for efficient processing of 16S rRNA. Probably interacts with the 5'-terminal helix region of 16S rRNA, bringing together different domains of the 30S ribosomal subunit which aids assembly. The polypeptide is Ribosome-binding factor A (Thermus thermophilus (strain ATCC 27634 / DSM 579 / HB8)).